The following is a 443-amino-acid chain: Diels-Alderase poxQ (443 aa).

The first 23 residues, 1–23, serve as a signal peptide directing secretion; sequence MARIPLEFLSITLPVLLLAYCLA. N-linked (GlcNAc...) asparagine glycans are attached at residues Asn-78, Asn-97, and Asn-145.

Belongs to the Diels-Alderase family.

It participates in secondary metabolite biosynthesis. In terms of biological role, diels-Alderase; part of the gene cluster that mediates the biosynthesis of oxaleimides, cytotoxic compounds containing an unusual disubstituted succinimide moiety. The first step of the pathway is provided by the HR-PKS poxF that serves in a new mode of collaborative biosynthesis with the PKS-NRPS poxE, by providing the olefin containing amino acid substrate via the synthesis of an ACP-bound dec-4-enoate. The cytochrome P450 monooxygenase poxM-catalyzed oxidation at the alpha-position creates the enzyme-bound 2-hydroxydec-4-enoyl-ACP thioester, which may be prone to spontaneous hydrolysis to yield 2-hydroxydec-4-enoic acid due to increased electrophilicity of the carbonyl. 2-hydroxydec-4-enoic acid can then be further oxidized by poxM to yield the alpha-ketoacid 2-oxodec-4-enoicacid, which is reductively aminated by the aminotransferase poxL to yield (S,E)-2-aminodec-4-enoic acid. The Hybrid PKS-NRPS synthetase poxE then performs condensation between the octaketide product of its PKS modules and the amino group of (S,E)-2-aminodec-4-enoic acid which is activated and incorporated by the adenylation domain. The resulting aminoacyl product can be cyclized by the Diels-Alderase PoxQ and reductively released by the reductive (R) domain of poxE to yield an aldehyde intermediate. The released aldehyde is then substrate for a Knoevenagel condensation by the hydrolyase poxO followed by an oxidation at the 5-position of the pyrrolidone ring. The presence of the olefin from the amino acid building block allows for migration of the substituted allyl group to occur. This allylic transposition reaction takes place in a conjugate addition, semipinacol-like fashion to yield a succinimide intermediate. Iterative two-electron oxidations of the C7 methyl of the succinimide intermediate to the carboxylic acid can be catalyzed by one of two remaining cytochrome P450 monooxygenasess poxC or poxD to yield oxaleimide A. Subsequent oxidation yields the maleimide scaffold oxaleimide I. Both oxaleimide A and oxaleimide I can undergo oxidative modifications in the decalin ring to yield the series of products oxaleimides B to H. The chain is Diels-Alderase poxQ from Penicillium oxalicum.